Consider the following 654-residue polypeptide: Protein LYK2 (654 aa).

The N-terminal stretch at 1 to 25 (MAVSVSKQYMTSLVVILLFISLSSL) is a signal peptide. Over 26-241 (SPTSTSHSCD…PSKKKRSKMK (216 aa)) the chain is Extracellular. Intrachain disulfides connect C50/C102, C57/C163, and C100/C161. Residues N103, N170, N193, and N204 are each glycosylated (N-linked (GlcNAc...) asparagine). The stretch at 177–217 (YPVGVRDSVSSLAVRFNTTEDAIVSANNKSGVVPLKPALIP) is one LysM; degenerate repeat. Residues 218-238 (LDHKPEKQGSRKRNPSKKKRS) are disordered. Residues 227–238 (SRKRNPSKKKRS) show a composition bias toward basic residues. Residues 242–262 (LMIAVSSAIAGVCGLVTLMVF) traverse the membrane as a helical segment. The Cytoplasmic segment spans residues 263 to 654 (GYLHWKKETQ…PLVKKSSIID (392 aa)). A Protein kinase domain is found at 324–619 (TPRKPVLEIY…EIAERVSRLV (296 aa)). ATP contacts are provided by residues 330-338 (LEIYAFEEL) and K368.

This sequence belongs to the protein kinase superfamily. Ser/Thr protein kinase family.

It is found in the cell membrane. May recognize microbe-derived N-acetylglucosamine (NAG)-containing ligands. In Arabidopsis thaliana (Mouse-ear cress), this protein is Protein LYK2 (LYK2).